A 506-amino-acid polypeptide reads, in one-letter code: Probable cytochrome P450 519E1 (506 aa).

The chain crosses the membrane as a helical span at residues 1 to 21 (MGIGLIILYLLIGLLAYDFTK). Residue cysteine 453 coordinates heme.

Belongs to the cytochrome P450 family. Heme serves as cofactor.

It localises to the membrane. The sequence is that of Probable cytochrome P450 519E1 (cyp519E1) from Dictyostelium discoideum (Social amoeba).